The primary structure comprises 34 residues: Cytochrome b6-f complex subunit 8 (34 aa).

Residues 3 to 23 (IFQIGWAALAAIFTFSIAMVV) traverse the membrane as a helical segment.

This sequence belongs to the PetN family. The 4 large subunits of the cytochrome b6-f complex are cytochrome b6, subunit IV (17 kDa polypeptide, PetD), cytochrome f and the Rieske protein, while the 4 small subunits are PetG, PetL, PetM and PetN. The complex functions as a dimer.

The protein resides in the cellular thylakoid membrane. Component of the cytochrome b6-f complex, which mediates electron transfer between photosystem II (PSII) and photosystem I (PSI), cyclic electron flow around PSI, and state transitions. This chain is Cytochrome b6-f complex subunit 8, found in Prochlorococcus marinus subsp. pastoris (strain CCMP1986 / NIES-2087 / MED4).